Here is a 164-residue protein sequence, read N- to C-terminus: SsrA-binding protein (164 aa).

Belongs to the SmpB family.

It is found in the cytoplasm. Functionally, required for rescue of stalled ribosomes mediated by trans-translation. Binds to transfer-messenger RNA (tmRNA), required for stable association of tmRNA with ribosomes. tmRNA and SmpB together mimic tRNA shape, replacing the anticodon stem-loop with SmpB. tmRNA is encoded by the ssrA gene; the 2 termini fold to resemble tRNA(Ala) and it encodes a 'tag peptide', a short internal open reading frame. During trans-translation Ala-aminoacylated tmRNA acts like a tRNA, entering the A-site of stalled ribosomes, displacing the stalled mRNA. The ribosome then switches to translate the ORF on the tmRNA; the nascent peptide is terminated with the 'tag peptide' encoded by the tmRNA and targeted for degradation. The ribosome is freed to recommence translation, which seems to be the essential function of trans-translation. The chain is SsrA-binding protein from Shewanella sediminis (strain HAW-EB3).